We begin with the raw amino-acid sequence, 216 residues long: MSEAYFPVESGALGPEENFLSLDDILMSQEKLPVRVETPMPRLGAFFLERGAGSEPDHPLPQGTKLELPLWLAKGLFDHKRRILSVELPKMYQEGWRTVFSADANVVDLHKMGPHFYGFGSQLLHFDSPENADISQSLLKTFIGRFRRIMDSSQNSYNEDTSALVARLDETERGLFQIGQRSLNDFQSWEKGQASQITASSLVQNYKKRKFTNMED.

Residues 1-16 (MSEAYFPVESGALGPE) form a not essential for folding and stability of GINS complex, but may regulate accessibility to the central complex pore region.

It belongs to the GINS3/PSF3 family. As to quaternary structure, component of the GINS complex which is a heterotetramer of GINS1, GINS2, GINS3 and GINS4. Forms a stable subcomplex with GINS2. GINS complex interacts with DNA primase in vitro. Component of the CMG helicase complex, a hexameric ring of related MCM2-7 subunits stabilized by CDC45 and the tetrameric GINS complex.

The protein localises to the nucleus. Its subcellular location is the chromosome. In terms of biological role, required for correct functioning of the GINS complex, a complex that plays an essential role in the initiation of DNA replication, and progression of DNA replication forks. GINS complex is a core component of CDC45-MCM-GINS (CMG) helicase, the molecular machine that unwinds template DNA during replication, and around which the replisome is built. The chain is DNA replication complex GINS protein PSF3 (Gins3) from Mus musculus (Mouse).